Reading from the N-terminus, the 101-residue chain is NAD(P)H-quinone oxidoreductase subunit 4L, chloroplastic (101 aa).

3 consecutive transmembrane segments (helical) span residues 2–22 (MFEH…YGLI), 32–52 (ICLE…SDLF), and 61–81 (IFAI…LSIL).

It belongs to the complex I subunit 4L family. As to quaternary structure, NDH is composed of at least 16 different subunits, 5 of which are encoded in the nucleus.

Its subcellular location is the plastid. It is found in the chloroplast thylakoid membrane. It catalyses the reaction a plastoquinone + NADH + (n+1) H(+)(in) = a plastoquinol + NAD(+) + n H(+)(out). The catalysed reaction is a plastoquinone + NADPH + (n+1) H(+)(in) = a plastoquinol + NADP(+) + n H(+)(out). Functionally, NDH shuttles electrons from NAD(P)H:plastoquinone, via FMN and iron-sulfur (Fe-S) centers, to quinones in the photosynthetic chain and possibly in a chloroplast respiratory chain. The immediate electron acceptor for the enzyme in this species is believed to be plastoquinone. Couples the redox reaction to proton translocation, and thus conserves the redox energy in a proton gradient. The polypeptide is NAD(P)H-quinone oxidoreductase subunit 4L, chloroplastic (Agrostis stolonifera (Creeping bentgrass)).